A 212-amino-acid polypeptide reads, in one-letter code: Ribosomal RNA small subunit methyltransferase G (212 aa).

S-adenosyl-L-methionine contacts are provided by residues Phe78, 96–98 (ESS), 124–125 (VE), and Arg141.

It belongs to the methyltransferase superfamily. RNA methyltransferase RsmG family.

It localises to the cytoplasm. Functionally, specifically methylates the N7 position of a guanine in 16S rRNA. The sequence is that of Ribosomal RNA small subunit methyltransferase G from Onion yellows phytoplasma (strain OY-M).